The primary structure comprises 144 residues: Large ribosomal subunit protein uL15 (144 aa).

Residues 1 to 54 (MRLNTLSPAEGSKKAGKRLGRGIGSGLGKTGGRGHKGQKSRSGGGVRRGFEGGQ) form a disordered region. The span at 21 to 31 (RGIGSGLGKTG) shows a compositional bias: gly residues.

Belongs to the universal ribosomal protein uL15 family. As to quaternary structure, part of the 50S ribosomal subunit.

In terms of biological role, binds to the 23S rRNA. The polypeptide is Large ribosomal subunit protein uL15 (Escherichia coli (strain K12 / MC4100 / BW2952)).